A 309-amino-acid chain; its full sequence is Thioredoxin reductase (309 aa).

35 to 42 (EKQFPGGK) is an FAD binding site. C134 and C137 are oxidised to a cystine. 277 to 286 (DIVDKNVRQI) provides a ligand contact to FAD.

It belongs to the class-II pyridine nucleotide-disulfide oxidoreductase family. As to quaternary structure, homodimer. The cofactor is FAD.

It localises to the cytoplasm. The enzyme catalyses [thioredoxin]-dithiol + NADP(+) = [thioredoxin]-disulfide + NADPH + H(+). This is Thioredoxin reductase (trxB) from Ureaplasma parvum serovar 3 (strain ATCC 700970).